Reading from the N-terminus, the 642-residue chain is Threonine--tRNA ligase (642 aa).

The region spanning 1–61 (MPVITLPDGS…ESDAQLAIIT (61 aa)) is the TGS domain. Residues 243 to 534 (DHRKIGKQLD…LTEEYAGFYP (292 aa)) form a catalytic region. The Zn(2+) site is built by C334, H385, and H511.

It belongs to the class-II aminoacyl-tRNA synthetase family. As to quaternary structure, homodimer. It depends on Zn(2+) as a cofactor.

Its subcellular location is the cytoplasm. It catalyses the reaction tRNA(Thr) + L-threonine + ATP = L-threonyl-tRNA(Thr) + AMP + diphosphate + H(+). In terms of biological role, catalyzes the attachment of threonine to tRNA(Thr) in a two-step reaction: L-threonine is first activated by ATP to form Thr-AMP and then transferred to the acceptor end of tRNA(Thr). Also edits incorrectly charged L-seryl-tRNA(Thr). The protein is Threonine--tRNA ligase of Serratia proteamaculans (strain 568).